The chain runs to 187 residues: Large ribosomal subunit protein uL5 (187 aa).

Belongs to the universal ribosomal protein uL5 family. In terms of assembly, part of the 50S ribosomal subunit; part of the 5S rRNA/L5/L18/L25 subcomplex. Contacts the 5S rRNA and the P site tRNA. Forms a bridge to the 30S subunit in the 70S ribosome.

Functionally, this is one of the proteins that bind and probably mediate the attachment of the 5S RNA into the large ribosomal subunit, where it forms part of the central protuberance. In the 70S ribosome it contacts protein S13 of the 30S subunit (bridge B1b), connecting the 2 subunits; this bridge is implicated in subunit movement. Contacts the P site tRNA; the 5S rRNA and some of its associated proteins might help stabilize positioning of ribosome-bound tRNAs. The polypeptide is Large ribosomal subunit protein uL5 (Mycobacterium avium (strain 104)).